Here is a 165-residue protein sequence, read N- to C-terminus: uncharacterized protein (165 aa).

Positions 22–34 (QQANQENMSSRTD) are enriched in polar residues. Residues 22–45 (QQANQENMSSRTDSPIPPFGESEQ) are disordered.

This is an uncharacterized protein from Homo sapiens (Human).